Reading from the N-terminus, the 246-residue chain is Exosome complex component Rrp41 (246 aa).

It belongs to the RNase PH family. Rrp41 subfamily. Component of the archaeal exosome complex. Forms a hexameric ring-like arrangement composed of 3 Rrp41-Rrp42 heterodimers. The hexameric ring associates with a trimer of Rrp4 and/or Csl4 subunits.

It localises to the cytoplasm. Functionally, catalytic component of the exosome, which is a complex involved in RNA degradation. Has 3'-&gt;5' exoribonuclease activity. Can also synthesize heteromeric RNA-tails. The sequence is that of Exosome complex component Rrp41 from Pyrobaculum aerophilum (strain ATCC 51768 / DSM 7523 / JCM 9630 / CIP 104966 / NBRC 100827 / IM2).